Here is a 486-residue protein sequence, read N- to C-terminus: Wax ester synthase/diacylglycerol acyltransferase 11 (486 aa).

The Cytoplasmic segment spans residues 1–192 (MGEDKKTARE…CNSGFFNKIW (192 aa)). His-144 serves as the catalytic Proton acceptor. A helical membrane pass occupies residues 193-213 (WLFVGLWFILRLLFNTFVDIL). Residues 214-486 (MFALTIFVLR…LERGLYEIEV (273 aa)) are Extracellular-facing.

In the N-terminal section; belongs to the long-chain O-acyltransferase family. Mostly expressed in inflorescences and flowers, especially at the periphery of petal epidermal cells.

It is found in the cell membrane. The protein resides in the endoplasmic reticulum membrane. The enzyme catalyses an acyl-CoA + a 1,2-diacyl-sn-glycerol = a triacyl-sn-glycerol + CoA. The catalysed reaction is a long chain fatty alcohol + a fatty acyl-CoA = a wax ester + CoA. The protein operates within glycerolipid metabolism; triacylglycerol biosynthesis. It participates in lipid metabolism. Bifunctional wax ester synthase/diacylglycerol acyltransferase. Involved in cuticular wax biosynthesis. Required for petals development, probably by mediating the production of fatty acids at the plasma membrane in the petal epidermis acting as lubricants that makes petal elongation smooth in narrow space between the sepals and the anthers inside floral buds. In Arabidopsis thaliana (Mouse-ear cress), this protein is Wax ester synthase/diacylglycerol acyltransferase 11.